We begin with the raw amino-acid sequence, 49 residues long: Large ribosomal subunit protein bL33A (49 aa).

Belongs to the bacterial ribosomal protein bL33 family.

This Latilactobacillus sakei subsp. sakei (strain 23K) (Lactobacillus sakei subsp. sakei) protein is Large ribosomal subunit protein bL33A.